Reading from the N-terminus, the 293-residue chain is MATNESVSIFSSASLAVEYVDSLLPENPLQEPFKNAWNYMLNNYTKFQIATWGSLIVHEALYFLFCLPGFLFQFIPYMKKYKIQKDKPETWENQWKCFKVLLFNHFCIQLPLICGTYYFTEYFNIPYDWERMPRWYFLLARCFGCAVIEDTWHYFLHRLLHHKRIYKYIHKVHHEFQAPFGMEAEYAHPLETLILGTGFFIGIVLLCDHVILLWAWVTIRLLETIDVHSGYDIPLNPLNLIPFYAGSRHHDFHHMNFIGNYASTFTWWDRIFGTDSQYNAYNEKRKKFEKKTE.

The next 2 helical transmembrane spans lie at 55 to 75 and 100 to 120; these read LIVH…FQFI and VLLF…YYFT. The region spanning 145 to 274 is the Fatty acid hydroxylase domain; sequence CAVIEDTWHY…FTWWDRIFGT (130 aa). Positions 157-161 match the Histidine box-1 motif; the sequence is HRLLH. The Histidine box-2 motif lies at 170-174; it reads HKVHH. A helical transmembrane segment spans residues 199-219; that stretch reads FFIGIVLLCDHVILLWAWVTI. The Histidine box-3 motif lies at 249-255; it reads HHDFHHM.

The protein belongs to the sterol desaturase family. The cofactor is Fe cation. Post-translationally, ubiquitinated by MARCHF6, leading to proteasomal degradation.

The protein localises to the endoplasmic reticulum membrane. It catalyses the reaction 4,4-dimethyl-5alpha-cholest-7-en-3beta-ol + 6 Fe(II)-[cytochrome b5] + 3 O2 + 5 H(+) = 4alpha-carboxy-4beta-methyl-5alpha-cholest-7-ene-3beta-ol + 6 Fe(III)-[cytochrome b5] + 4 H2O. It carries out the reaction 4,4-dimethyl-5alpha-cholesta-8,24-dien-3beta-ol + 6 Fe(II)-[cytochrome b5] + 3 O2 + 5 H(+) = 4beta-methylzymosterol-4alpha-carboxylate + 6 Fe(III)-[cytochrome b5] + 4 H2O. The enzyme catalyses 4alpha-methylzymosterol + 6 Fe(II)-[cytochrome b5] + 3 O2 + 5 H(+) = 4alpha-carboxyzymosterol + 6 Fe(III)-[cytochrome b5] + 4 H2O. The catalysed reaction is 4alpha-methyl-5alpha-cholest-7-en-3beta-ol + 6 Fe(II)-[cytochrome b5] + 3 O2 + 5 H(+) = 4alpha-carboxy-5alpha-cholest-7-en-3beta-ol + 6 Fe(III)-[cytochrome b5] + 4 H2O. It catalyses the reaction 4,4-dimethyl-5alpha-cholest-8-en-3beta-ol + 6 Fe(II)-[cytochrome b5] + 3 O2 + 5 H(+) = 4alpha-carboxy-4beta-methyl-5alpha-cholest-8-en-3beta-ol + 6 Fe(III)-[cytochrome b5] + 4 H2O. It carries out the reaction 4alpha-methyl-5alpha-cholest-8-en-3beta-ol + 6 Fe(II)-[cytochrome b5] + 3 O2 + 5 H(+) = 4alpha-carboxy-5alpha-cholest-8-ene-3beta-ol + 6 Fe(III)-[cytochrome b5] + 4 H2O. It participates in steroid biosynthesis; zymosterol biosynthesis; zymosterol from lanosterol: step 3/6. Its pathway is steroid biosynthesis; cholesterol biosynthesis. Catalyzes the three-step monooxygenation required for the demethylation of 4,4-dimethyl and 4alpha-methylsterols, which can be subsequently metabolized to cholesterol. The polypeptide is Methylsterol monooxygenase 1 (MSMO1) (Pongo abelii (Sumatran orangutan)).